A 488-amino-acid chain; its full sequence is Glycogen synthase (488 aa).

Lys-17 is an ADP-alpha-D-glucose binding site.

Belongs to the glycosyltransferase 1 family. Bacterial/plant glycogen synthase subfamily.

It catalyses the reaction [(1-&gt;4)-alpha-D-glucosyl](n) + ADP-alpha-D-glucose = [(1-&gt;4)-alpha-D-glucosyl](n+1) + ADP + H(+). It participates in glycan biosynthesis; glycogen biosynthesis. Functionally, synthesizes alpha-1,4-glucan chains using ADP-glucose. This Nitratidesulfovibrio vulgaris (strain DSM 19637 / Miyazaki F) (Desulfovibrio vulgaris) protein is Glycogen synthase.